We begin with the raw amino-acid sequence, 2049 residues long: Kinetochore-associated protein rod-1 (2049 aa).

In terms of assembly, component of the RZZ complex composed of rod-1, czw-1 and zwl-1. Interacts (via N-terminus) with NDC80 complex component ndc-80.

The protein localises to the chromosome. It localises to the centromere. The protein resides in the kinetochore. It is found in the cytoplasm. Its subcellular location is the cytoskeleton. The protein localises to the spindle. Its function is as follows. Essential component of the mitotic checkpoint, which prevents cells from prematurely exiting mitosis. Required for chromosome segregation, the assembly of the dynein-dynactin and mdf-1-mdf-2 complexes onto kinetochores and spindle pole separation. Plays a role in nuclear envelope breakdown. Its function related to the spindle assembly machinery and kinetochore-microtubule attachments likely depends on its association in the mitotic RZZ complex. The RZZ complex recruits the spindly-like protein spdl-1 to kinetochores. To prevent irregular chromosome segregation, the complex also inhibits the attachment of the kinetochore-associated NDC80 complex to microtubules. The recruitment of spdl-1 to kinetochores relieves this inhibition. Required for embryonic development. The protein is Kinetochore-associated protein rod-1 of Caenorhabditis elegans.